A 402-amino-acid chain; its full sequence is Acetate kinase (402 aa).

Asn7 is a binding site for Mg(2+). An ATP-binding site is contributed by Lys14. Residue Arg95 coordinates substrate. Residue Asp152 is the Proton donor/acceptor of the active site. ATP-binding positions include 212–216 (HLGNG), 286–288 (DMR), and 334–338 (GIGEN). Glu388 is a binding site for Mg(2+).

It belongs to the acetokinase family. As to quaternary structure, homodimer. The cofactor is Mg(2+). It depends on Mn(2+) as a cofactor.

It is found in the cytoplasm. The enzyme catalyses acetate + ATP = acetyl phosphate + ADP. Its pathway is metabolic intermediate biosynthesis; acetyl-CoA biosynthesis; acetyl-CoA from acetate: step 1/2. In terms of biological role, catalyzes the formation of acetyl phosphate from acetate and ATP. Can also catalyze the reverse reaction. This is Acetate kinase from Nitratidesulfovibrio vulgaris (strain ATCC 29579 / DSM 644 / CCUG 34227 / NCIMB 8303 / VKM B-1760 / Hildenborough) (Desulfovibrio vulgaris).